A 217-amino-acid chain; its full sequence is Zinc finger CCHC-type and RNA-binding motif-containing protein 1 (217 aa).

The region spanning 10-88 (STVYVSNLPF…RVIKASIAID (79 aa)) is the RRM domain. The CCHC-type zinc finger occupies 105 to 122 (SKCYECGESGHLSYACPK). The segment at 120–217 (CPKNMLGERE…YFSDEEELSD (98 aa)) is disordered. Over residues 145–163 (PEEEIEEVEVSEEEGEDPA) the composition is skewed to acidic residues. Phosphoserine occurs at positions 155, 210, and 216.

As to quaternary structure, component of the U11/U12 snRNPs that are part of the U12-type spliceosome. Interacts with ZRSR1. As to expression, expressed at higher level in heart and testis, and at lower level in cerebellum. Weakly expressed at low level in liver.

It localises to the nucleus. Its subcellular location is the nucleoplasm. The sequence is that of Zinc finger CCHC-type and RNA-binding motif-containing protein 1 (Zcrb1) from Mus musculus (Mouse).